Reading from the N-terminus, the 414-residue chain is Sec-independent protein translocase protein TatC (414 aa).

Residues 1-21 (MTQSTSVSKGGRVSRKAKKNP) are disordered. 6 helical membrane passes run 45 to 65 (IAVT…AWAI), 119 to 139 (GGLA…WRFI), 157 to 177 (IAGF…PMGL), 200 to 220 (FVIA…FTAM), 238 to 258 (IMIV…DPIS), and 259 to 279 (MLVL…FTRI). Residues 315 to 414 (IYDGDHKGIA…IQSSSFDDVL (100 aa)) are disordered. Positions 323–336 (IAGGGDAHPAGGSG) are enriched in gly residues. The span at 345-357 (TAPTRAPSASESP) shows a compositional bias: low complexity. Positions 403–414 (DTIQSSSFDDVL) are enriched in polar residues.

The protein belongs to the TatC family. The Tat system comprises two distinct complexes: a TatABC complex, containing multiple copies of TatA, TatB and TatC subunits, and a separate TatA complex, containing only TatA subunits. Substrates initially bind to the TatABC complex, which probably triggers association of the separate TatA complex to form the active translocon.

It localises to the cell membrane. Part of the twin-arginine translocation (Tat) system that transports large folded proteins containing a characteristic twin-arginine motif in their signal peptide across membranes. Together with TatB, TatC is part of a receptor directly interacting with Tat signal peptides. The sequence is that of Sec-independent protein translocase protein TatC from Corynebacterium kroppenstedtii (strain DSM 44385 / JCM 11950 / CIP 105744 / CCUG 35717).